A 524-amino-acid chain; its full sequence is MNQAVRFRPVITFALAFILIITWFAPRADAAAQWQAGTAYKQGDLVTYLNKDYECIQPHTALTGWEPSNVPALWKYVGEGTGGGTPTPDTTPPTVPAGLTSSLVTDTSVNLTWNASTDNVGVTGYEVYRNGTLVANTSTTTAVVTGLTAGTTYVFTVKAKDAAGNLSAASTSLSVTTSTGSSNPGPSGSKWLIGYWHNFDNGSTNIKLRNVSTAYDVINVSFAEPISPGSGTLAFTPYNATVEEFKSDIAYLQSQGKKVLISMGGANGRIELTDATKKRQQFEDSLKSIISTYGFNGLDIDLEGSSLSLNAGDTDFRSPTTPKIVNLINGVKALKSHFGANFVLTAAPETAYVQGGYLNYGGPWGAYLPVIHALRNDLTLLHVQHYNTGSMVGLDGRSYAQGTADFHVAMAQMLLQGFNVGGSSGPFFSPLRPDQIAIGVPASQQAAGGGYTAPAELQKALNYLIKGVSYGGSYTLRQPAGYVGLKGIMTWSINWDAYTNNQFSNAHRPFLNGLSTQKTEEVVY.

The signal sequence occupies residues 1-30; that stretch reads MNQAVRFRPVITFALAFILIITWFAPRADA. Residues 95–180 enclose the Fibronectin type-III domain; the sequence is VPAGLTSSLV…TSLSVTTSTG (86 aa). Residues 190-514 enclose the GH18 domain; it reads KWLIGYWHNF…NAHRPFLNGL (325 aa). The active-site Proton donor is the glutamate 303.

The protein belongs to the glycosyl hydrolase 18 family. Chitinase class II subfamily.

The catalysed reaction is Random endo-hydrolysis of N-acetyl-beta-D-glucosaminide (1-&gt;4)-beta-linkages in chitin and chitodextrins.. In Niallia circulans (Bacillus circulans), this protein is Chitinase D (chiD).